The chain runs to 487 residues: ATP synthase subunit beta (487 aa).

171 to 178 contacts ATP; that stretch reads GGAGVGKT.

The protein belongs to the ATPase alpha/beta chains family. As to quaternary structure, F-type ATPases have 2 components, CF(1) - the catalytic core - and CF(0) - the membrane proton channel. CF(1) has five subunits: alpha(3), beta(3), gamma(1), delta(1), epsilon(1). CF(0) has three main subunits: a(1), b(2) and c(9-12). The alpha and beta chains form an alternating ring which encloses part of the gamma chain. CF(1) is attached to CF(0) by a central stalk formed by the gamma and epsilon chains, while a peripheral stalk is formed by the delta and b chains.

It is found in the cell membrane. It carries out the reaction ATP + H2O + 4 H(+)(in) = ADP + phosphate + 5 H(+)(out). Functionally, produces ATP from ADP in the presence of a proton gradient across the membrane. The catalytic sites are hosted primarily by the beta subunits. The protein is ATP synthase subunit beta of Leifsonia xyli subsp. xyli (strain CTCB07).